We begin with the raw amino-acid sequence, 260 residues long: GDSL esterase/lipase WDL1 (260 aa).

The N-terminal stretch at 1–35 is a signal peptide; that stretch reads MLGFAPAPGRPLFVLFGSSIVQFSFSNGGWGAALA. The active-site Nucleophile is the Ser18. Asn83 and Asn150 each carry an N-linked (GlcNAc...) asparagine glycan. Active-site residues include Asp191 and His194.

This sequence belongs to the 'GDSL' lipolytic enzyme family. In terms of tissue distribution, highly expressed in panicles. Expressed in shoots, mature flowers and seeds.

It is found in the endoplasmic reticulum. Involved in the organization of leaf cuticle and wax crystals. The polypeptide is GDSL esterase/lipase WDL1 (Oryza sativa subsp. japonica (Rice)).